A 151-amino-acid polypeptide reads, in one-letter code: Small ribosomal subunit protein uS15z (151 aa).

This sequence belongs to the universal ribosomal protein uS15 family.

The polypeptide is Small ribosomal subunit protein uS15z (Oryza sativa subsp. japonica (Rice)).